A 142-amino-acid polypeptide reads, in one-letter code: Large ribosomal subunit protein bL21 (142 aa).

Residues arginine 74–glycine 84 show a composition bias toward basic residues. The disordered stretch occupies residues arginine 74 to glutamate 142. Positions lysine 107–lysine 125 are enriched in basic and acidic residues. Over residues proline 126–alanine 135 the composition is skewed to basic residues.

It belongs to the bacterial ribosomal protein bL21 family. As to quaternary structure, part of the 50S ribosomal subunit. Contacts protein L20.

Functionally, this protein binds to 23S rRNA in the presence of protein L20. In Brucella abortus (strain S19), this protein is Large ribosomal subunit protein bL21.